Reading from the N-terminus, the 218-residue chain is uncharacterized protein (218 aa).

It belongs to the HAD-like hydrolase superfamily.

Its subcellular location is the cytoplasm. It localises to the nucleus. This is an uncharacterized protein from Saccharomyces cerevisiae (strain ATCC 204508 / S288c) (Baker's yeast).